Consider the following 426-residue polypeptide: Proline--tRNA ligase (426 aa).

The protein belongs to the class-II aminoacyl-tRNA synthetase family. ProS type 2 subfamily. As to quaternary structure, homodimer.

It localises to the cytoplasm. The catalysed reaction is tRNA(Pro) + L-proline + ATP = L-prolyl-tRNA(Pro) + AMP + diphosphate. Its function is as follows. Catalyzes the attachment of proline to tRNA(Pro) in a two-step reaction: proline is first activated by ATP to form Pro-AMP and then transferred to the acceptor end of tRNA(Pro). The polypeptide is Proline--tRNA ligase (Ehrlichia ruminantium (strain Gardel)).